The sequence spans 179 residues: MARLKDVYLKTVAPALFKDFGFKSPMQVPRITKIVINIGLGEALQNPKAVEAAIGDLTMIAGQKPVVTRAKKSLAAFKLRQGMPIGAMVTLRNDRMYDFYDRLVNLALPRIRDFQGLSRKSFDGRGNYSIGIREQIIFPEIEYDKVDKIRGLEVAIVTTAPNDEQGFALLKALGMPFRD.

This sequence belongs to the universal ribosomal protein uL5 family. As to quaternary structure, part of the 50S ribosomal subunit; part of the 5S rRNA/L5/L18/L25 subcomplex. Contacts the 5S rRNA and the P site tRNA. Forms a bridge to the 30S subunit in the 70S ribosome.

Its function is as follows. This is one of the proteins that bind and probably mediate the attachment of the 5S RNA into the large ribosomal subunit, where it forms part of the central protuberance. In the 70S ribosome it contacts protein S13 of the 30S subunit (bridge B1b), connecting the 2 subunits; this bridge is implicated in subunit movement. Contacts the P site tRNA; the 5S rRNA and some of its associated proteins might help stabilize positioning of ribosome-bound tRNAs. The protein is Large ribosomal subunit protein uL5 of Herpetosiphon aurantiacus (strain ATCC 23779 / DSM 785 / 114-95).